A 165-amino-acid polypeptide reads, in one-letter code: Chorismate pyruvate-lyase (165 aa).

Methionine 35, arginine 77, leucine 115, and glutamate 156 together coordinate substrate.

The protein belongs to the UbiC family. Monomer.

It localises to the cytoplasm. The catalysed reaction is chorismate = 4-hydroxybenzoate + pyruvate. Its pathway is cofactor biosynthesis; ubiquinone biosynthesis. Functionally, removes the pyruvyl group from chorismate, with concomitant aromatization of the ring, to provide 4-hydroxybenzoate (4HB) for the ubiquinone pathway. This Enterobacter sp. (strain 638) protein is Chorismate pyruvate-lyase.